The primary structure comprises 429 residues: Phosphoribosylamine--glycine ligase (429 aa).

Positions 109-316 constitute an ATP-grasp domain; it reads KDFLARHHIP…LVELCLAACD (208 aa). An ATP-binding site is contributed by 135–196; sequence LREKGAPIVV…EEFLDGEEAS (62 aa). Positions 209–231 are disordered; it reads MATSQDHKRVGENDTGLNTGGMG. Residues glutamate 286 and asparagine 288 each contribute to the Mg(2+) site.

This sequence belongs to the GARS family. Requires Mg(2+) as cofactor. It depends on Mn(2+) as a cofactor.

The enzyme catalyses 5-phospho-beta-D-ribosylamine + glycine + ATP = N(1)-(5-phospho-beta-D-ribosyl)glycinamide + ADP + phosphate + H(+). Its pathway is purine metabolism; IMP biosynthesis via de novo pathway; N(1)-(5-phospho-D-ribosyl)glycinamide from 5-phospho-alpha-D-ribose 1-diphosphate: step 2/2. The protein is Phosphoribosylamine--glycine ligase of Pasteurella multocida (strain Pm70).